A 382-amino-acid chain; its full sequence is MAAQRPLTIALVAGETSGDILGAGLIRALKARVPNARFVGVAGPRMQAEGCEAWYEMEELAVMGIVEVLGRLRRLLHIRADLTRRFTELKPDVFVGIDAPDFNITLEGNLKKQGIKTIHYVSPSVWAWRQKRVFKIGRSTHMVLAFLPFEKAFYDKFNVPCRFIGHTMADAMPLDPDKNAARDVLGIPHDAHCLALLPGSRGAEVEMLSADFLKTAQLLRQRYPDLEVVVPLVNAKRREQFEKIKAEVAPDLAVHLLDGMAREAMIASDAALLASGTAALECMLAKCPMVVGYRMKPFTFWLAKRLVKTEYVSLPNLLAGRELVKELLQEECEPQKLAEALLPLLANGKTSHAMHDTFRELHQQIRCNADEQAADAVLELAQ.

It belongs to the LpxB family.

It catalyses the reaction 2-N,3-O-bis[(3R)-3-hydroxytetradecanoyl]-alpha-D-glucosaminyl 1-phosphate + UDP-2-N,3-O-bis[(3R)-3-hydroxytetradecanoyl]-alpha-D-glucosamine = lipid A disaccharide (E. coli) + UDP + H(+). The enzyme catalyses a lipid X + a UDP-2-N,3-O-bis[(3R)-3-hydroxyacyl]-alpha-D-glucosamine = a lipid A disaccharide + UDP + H(+). The protein operates within glycolipid biosynthesis; lipid IV(A) biosynthesis; lipid IV(A) from (3R)-3-hydroxytetradecanoyl-[acyl-carrier-protein] and UDP-N-acetyl-alpha-D-glucosamine: step 5/6. Functionally, condensation of UDP-2,3-diacylglucosamine and 2,3-diacylglucosamine-1-phosphate to form lipid A disaccharide, a precursor of lipid A, a phosphorylated glycolipid that anchors the lipopolysaccharide to the outer membrane of the cell. The sequence is that of Lipid-A-disaccharide synthase from Salmonella heidelberg (strain SL476).